We begin with the raw amino-acid sequence, 207 residues long: Large ribosomal subunit protein uL4 (207 aa).

The tract at residues R44–T77 is disordered. Residues G47–G59 are compositionally biased toward basic and acidic residues. A compositionally biased stretch (basic residues) spans G60–T77.

This sequence belongs to the universal ribosomal protein uL4 family. Part of the 50S ribosomal subunit.

In terms of biological role, one of the primary rRNA binding proteins, this protein initially binds near the 5'-end of the 23S rRNA. It is important during the early stages of 50S assembly. It makes multiple contacts with different domains of the 23S rRNA in the assembled 50S subunit and ribosome. Functionally, forms part of the polypeptide exit tunnel. The protein is Large ribosomal subunit protein uL4 of Desulforudis audaxviator (strain MP104C).